The sequence spans 213 residues: Superoxide dismutase [Fe] (213 aa).

Residues His28, His82, Asp164, and His168 each contribute to the Fe cation site.

It belongs to the iron/manganese superoxide dismutase family. In terms of assembly, homotetramer. It depends on Fe cation as a cofactor.

The catalysed reaction is 2 superoxide + 2 H(+) = H2O2 + O2. In terms of biological role, destroys superoxide anion radicals which are normally produced within the cells and which are toxic to biological systems. The protein is Superoxide dismutase [Fe] (sodB) of Aquifex aeolicus (strain VF5).